We begin with the raw amino-acid sequence, 220 residues long: Elongation factor Ts (220 aa).

Residues 83 to 86 are involved in Mg(2+) ion dislocation from EF-Tu; it reads TDFV.

This sequence belongs to the EF-Ts family.

Its subcellular location is the cytoplasm. Its function is as follows. Associates with the EF-Tu.GDP complex and induces the exchange of GDP to GTP. It remains bound to the aminoacyl-tRNA.EF-Tu.GTP complex up to the GTP hydrolysis stage on the ribosome. The protein is Elongation factor Ts of Synechococcus sp. (strain CC9605).